The primary structure comprises 266 residues: GTP cyclohydrolase FolE2 1 (266 aa).

The protein belongs to the GTP cyclohydrolase IV family.

The catalysed reaction is GTP + H2O = 7,8-dihydroneopterin 3'-triphosphate + formate + H(+). It participates in cofactor biosynthesis; 7,8-dihydroneopterin triphosphate biosynthesis; 7,8-dihydroneopterin triphosphate from GTP: step 1/1. Functionally, converts GTP to 7,8-dihydroneopterin triphosphate. The chain is GTP cyclohydrolase FolE2 1 from Dechloromonas aromatica (strain RCB).